The chain runs to 137 residues: Nucleoside diphosphate kinase (137 aa).

Residues Lys-9, Phe-57, Arg-85, Thr-91, Arg-102, and Asn-112 each coordinate ATP. The active-site Pros-phosphohistidine intermediate is the His-115.

Belongs to the NDK family. Homotetramer. Mg(2+) serves as cofactor.

It localises to the cytoplasm. The catalysed reaction is a 2'-deoxyribonucleoside 5'-diphosphate + ATP = a 2'-deoxyribonucleoside 5'-triphosphate + ADP. It catalyses the reaction a ribonucleoside 5'-diphosphate + ATP = a ribonucleoside 5'-triphosphate + ADP. In terms of biological role, major role in the synthesis of nucleoside triphosphates other than ATP. The ATP gamma phosphate is transferred to the NDP beta phosphate via a ping-pong mechanism, using a phosphorylated active-site intermediate. The protein is Nucleoside diphosphate kinase of Nitratiruptor sp. (strain SB155-2).